Reading from the N-terminus, the 441-residue chain is Hexane cyclase gkaB (441 aa).

A signal peptide spans 1 to 25 (MTKFLAGAAIVLAVAFGSFFSQSST). Residues Asn77, Asn153, Asn184, and Asn308 are each glycosylated (N-linked (GlcNAc...) asparagine).

It belongs to the Diels-Alderase family.

It functions in the pathway mycotoxin biosynthesis. Functionally, hexane cyclase; part of the gene cluster that mediates the biosynthesis of GKK1032, fungal natural products containing a macrocyclic para-cyclophane connected to a decahydrofluorene ring system that show potent antitumor activities. Within the pathway, gkaB functions synergistically with gkaX and gkaZ to form the cyclophane. The pathway begins with the PKS-NRPS gkaA which, with the help of the trans-enoyl reductase gkaC, synthesizes the polyketide-tyrosyl acyl thioester product which can be reductively off-loaded by the terminal reductase (R) domain in gkaA. The alpha/beta hydrolase gkaG is then required to catalyze the subsequent Knoevenagel condensation that affords the 3-pyrrolin-2-one ring, whereas the three proteins gkaB, gkaX and gkaZ then function synergistically to form the cyclophane. The polypeptide is Hexane cyclase gkaB (Penicillium citrinum).